We begin with the raw amino-acid sequence, 193 residues long: Achaete-scute homolog 2 (193 aa).

3 disordered regions span residues 1–27, 37–56, and 118–177; these read MDGGTLPRSAPPAPPVPVGCAARRRPA, RRRPATAETGGGAAAVARRN, and GGLR…GALS. Positions 50 to 102 constitute a bHLH domain; that stretch reads AAVARRNERERNRVKLVNLGFQALRQHVPHGGASKKLSKVETLRSAVEYIRAL. Over residues 140–150 the composition is skewed to low complexity; the sequence is AASPSRASSSP.

In terms of assembly, efficient DNA binding requires dimerization with another basic helix-loop-helix (bHLH) protein. Forms heterodimers with bHLH transcription factor TCF3. May not heterodimerise with bHLH protein HAND1. In terms of tissue distribution, expressed in the placenta at a stage between the first and second trimesters and when it matures, at about 32-36 weeks. Expressed in the extravillous trophoblasts, the intermediate trophoblasts, and at lower levels in the cytotrophoblasts and stroma of chorionic villi of the developing placenta. Expressed in follicular T-helper (Tfh) cells.

It is found in the nucleus. Its function is as follows. Transcription factor. Binds to E-box motifs 5'-CANNTG-3' in the regulatory elements of target genes, probably as a heterodimer with another basic helix-loop-helix (bHLH) protein such as the transcription factor TCF3. May bind both open and closed chromatin, acting as a pioneer transcription factor to allow other factors to bind and activate lineage-specific genes. Required during post-implantation development for the generation of some differentiated trophoblast cell types. Transcriptional activity of ASCL2 may be antagonised in a subset of trophoblast cells by bHLH transcription factor HAND1, perhaps by competing for dimerization with other bHLH proteins. Involved in differentiation and function of follicular T-helper (Tfh) cells, thereby playing a role in germinal center responses; probably modulates expression of genes involved in Tfh cell function, such as BCL6. May also act as a suppressor of Th1-, Th2- and Th17-cell differentiation. Induces the formation of stem cells in intestinal crypts in vitro, synergistically activating transcription of target genes, such as SOX9, together with TCF4/beta-catenin. May form a bistable transcriptional switch, controlling expression of its own gene together with Wnt/R-spondin signaling, and thereby maintaining stem cell characteristics. Modulates expression of target genes, including perhaps down-regulating EGR1/Krox24 and chemokine CXCL10/Mob-1 and up-regulating CXCR4 and CDKN1C/p57kip2, in Schwann cells. May play a role in reducing proliferation of Schwann cells, perhaps acting via modulation of expression of CDKN1C. May be dispensable for blastocyst formation and later embryonic function. May be involved in the determination of neuronal precursors. The protein is Achaete-scute homolog 2 (ASCL2) of Homo sapiens (Human).